Here is a 520-residue protein sequence, read N- to C-terminus: Calcium and calcium/calmodulin-dependent serine/threonine-protein kinase (520 aa).

Residues 13–302 (YEVVDVLGKG…ANDLLKHPWV (290 aa)) enclose the Protein kinase domain. Residues 19–27 (LGKGGFSVV) and Lys-44 contribute to the ATP site. Catalysis depends on Asp-167, which acts as the Proton acceptor. The chain crosses the membrane as a helical span at residues 227-243 (MWSLGVILYILLSGCPP). Thr-267 is modified (phosphothreonine; by autocatalysis). The calmodulin-binding stretch occupies residues 325 to 338 (ARRKLRAAAIASVL). The stretch at 346 to 368 (TKKLKNLLGSHDMKSEELENLRA) forms a coiled coil. 4 consecutive EF-hand domains span residues 361 to 395 (EELE…MKMN), 396 to 431 (SLIP…LRNS), 432 to 467 (QGDD…LPED), and 474 to 509 (TEPG…DSSL). Positions 409, 411, 413, 415, 420, 445, 447, 449, 451, 456, 487, 489, 491, and 498 each coordinate Ca(2+).

This sequence belongs to the protein kinase superfamily. CAMK Ser/Thr protein kinase family. CaMK subfamily. In terms of processing, autophosphorylation stimulated by calcium and inhibited by calcium/calmodulin. Occurs probably by an intermolecular mechanism.

Its subcellular location is the membrane. The enzyme catalyses L-seryl-[protein] + ATP = O-phospho-L-seryl-[protein] + ADP + H(+). The catalysed reaction is L-threonyl-[protein] + ATP = O-phospho-L-threonyl-[protein] + ADP + H(+). Activated by calcium/calmodulin binding after calcium-induced autophosphorylation. Autophosphorylation is associated with a time-dependent loss of kinase activity sensitive to reaction pH and ATP concentration. In vitro inactivation leads to the formation of network-like structures. In terms of biological role, protein kinase that may be involved in microsporogenesis. The sequence is that of Calcium and calcium/calmodulin-dependent serine/threonine-protein kinase (CCAMK) from Lilium longiflorum (Trumpet lily).